A 349-amino-acid chain; its full sequence is C-X-C chemokine receptor type 4 (349 aa).

An important for chemokine binding and signaling region spans residues 1 to 18 (MEIYTSDNYSEEVGSGDY). The segment at 1–23 (MEIYTSDNYSEEVGSGDYDSNKE) is disordered. The Extracellular segment spans residues 1 to 35 (MEIYTSDNYSEEVGSGDYDSNKEPCFRDENENFNR). N-linked (GlcNAc...) asparagine glycosylation is present at asparagine 8. Tyrosine 9 bears the Sulfotyrosine mark. A glycan (O-linked (Xyl...) (chondroitin sulfate) serine) is linked at serine 15. Tyrosine 18 bears the Sulfotyrosine mark. 2 disulfide bridges follow: cysteine 25–cysteine 271 and cysteine 106–cysteine 183. The helical transmembrane segment at 36–60 (IFLPTIYFIIFLTGIVGNGLVILVM) threads the bilayer. Topologically, residues 61 to 74 (GYQKKLRSMTDKYR) are cytoplasmic. A helical transmembrane segment spans residues 75-96 (LHLSVADLLFVITLPFWAVDAM). Positions 91-94 (WAVD) are chemokine binding. Residues 97-107 (ADWYFGKFLCK) are Extracellular-facing. The chain crosses the membrane as a helical span at residues 108–127 (AVHIIYTVNLYSSVLILAFI). The segment at 110–114 (HIIYT) is chemokine binding. Residues 128–151 (SLDRYLAIVHATNSQRPRKLLAEK) lie on the Cytoplasmic side of the membrane. An Important for signaling motif is present at residues 130–132 (DRY). Positions 132–144 (YLAIVHATNSQRP) are involved in dimerization; when bound to chemokine. Residues 152–171 (AVYVGVWIPALLLTIPDIIF) traverse the membrane as a helical segment. At 172 to 192 (ADVSQGDGRYICDRLYPDSLW) the chain is on the extracellular side. Positions 183–187 (CDRLY) are chemokine binding, important for signaling. The involved in dimerization stretch occupies residues 188–207 (PDSLWMVVFQFQHIMVGLIL). Residues 193-213 (MVVFQFQHIMVGLILPGIVIL) form a helical membrane-spanning segment. Over 214-238 (SCYCIIISKLSHSKGHQKRKALKTT) the chain is Cytoplasmic. A helical transmembrane segment spans residues 239-258 (VILILAFFACWLPYYVGISI). The Extracellular segment spans residues 259–279 (DSFILLEVIKQGCEFESVVHK). Residues 263–265 (LLE) are involved in dimerization. Residues 280–299 (WISITEALAFFHCCLNPILY) form a helical membrane-spanning segment. At 300–349 (AFLGAKFKSSAQHALNSMSRGSSLKILSKGKRGGHSSVSTESESSSFHSS) the chain is on the cytoplasmic side. Phosphoserine is present on residues serine 316 and serine 318. Phosphoserine; by PKC and GRK6 occurs at positions 321 and 322. The tract at residues 325–349 (ILSKGKRGGHSSVSTESESSSFHSS) is disordered. The residue at position 327 (serine 327) is a Phosphoserine; by GRK6. Lysine 328 is covalently cross-linked (Glycyl lysine isopeptide (Lys-Gly) (interchain with G-Cter in ubiquitin)). Residues 334 to 349 (HSSVSTESESSSFHSS) show a composition bias toward low complexity. Phosphoserine; by GRK6 is present on serine 336. Serine 345 and serine 348 each carry phosphoserine.

Belongs to the G-protein coupled receptor 1 family. As to quaternary structure, monomer. Can form homodimers. Interacts with CD164. Interacts with ARRB2; the interaction is dependent on the C-terminal phosphorylation of CXCR4 and allows activation of MAPK1 and MAPK3. Interacts with ARR3; the interaction is dependent on the C-terminal phosphorylation of CXCR4 and modulates calcium mobilization. Interacts with RNF113A; the interaction, enhanced by CXCL12, promotes CXCR4 ubiquitination and subsequent degradation. Interacts (via the cytoplasmic C-terminal) with ITCH (via the WW domains I and II); the interaction, enhanced by CXCL12, promotes CXCR4 ubiquitination and leads to its degradation. Interacts with extracellular ubiquitin. Interacts with DBN1; this interaction is enhanced by antigenic stimulation. Following LPS binding, may form a complex with GDF5, HSP90AA1 and HSPA8. Post-translationally, phosphorylated on agonist stimulation. Rapidly phosphorylated on serine and threonine residues in the C-terminal. Phosphorylation at Ser-321 and Ser-322 leads to recruitment of ITCH, ubiquitination and protein degradation. In terms of processing, ubiquitinated after ligand binding, leading to its degradation. Ubiquitinated by ITCH at the cell membrane on agonist stimulation. The ubiquitin-dependent mechanism, endosomal sorting complex required for transport (ESCRT), then targets CXCR4 for lysosomal degradation. This process is dependent also on prior Ser-/Thr-phosphorylation in the C-terminal of CXCR4. Also binding of ARRB1 to STAM negatively regulates CXCR4 sorting to lysosomes though modulating ubiquitination of SFR5S. Sulfation is required for efficient binding of CXCL12/SDF-1alpha and promotes its dimerization. Post-translationally, O- and N-glycosylated. N-glycosylation can mask coreceptor function. The O-glycosylation chondroitin sulfate attachment does not affect interaction with CXCL12/SDF-1alpha nor its coreceptor activity.

It is found in the cell membrane. It localises to the cell junction. The protein localises to the early endosome. The protein resides in the late endosome. Its subcellular location is the lysosome. In terms of biological role, receptor for the C-X-C chemokine CXCL12/SDF-1 that transduces a signal by increasing intracellular calcium ion levels and enhancing MAPK1/MAPK3 activation. Involved in the AKT signaling cascade. Plays a role in regulation of cell migration, e.g. during wound healing. Acts as a receptor for extracellular ubiquitin; leading to enhanced intracellular calcium ions and reduced cellular cAMP levels. Binds bacterial lipopolysaccharide (LPS) et mediates LPS-induced inflammatory response, including TNF secretion by monocytes. Involved in hematopoiesis and in cardiac ventricular septum formation. Also plays an essential role in vascularization of the gastrointestinal tract, probably by regulating vascular branching and/or remodeling processes in endothelial cells. Involved in cerebellar development. In the CNS, could mediate hippocampal-neuron survival. The chain is C-X-C chemokine receptor type 4 (Cxcr4) from Rattus norvegicus (Rat).